A 255-amino-acid polypeptide reads, in one-letter code: NAD kinase (255 aa).

Aspartate 44 (proton acceptor) is an active-site residue. NAD(+)-binding positions include 44–45 (DG), histidine 49, 114–115 (NE), aspartate 144, alanine 152, 155–160 (SAYNLS), and glutamine 216.

It belongs to the NAD kinase family. The cofactor is a divalent metal cation.

It is found in the cytoplasm. It catalyses the reaction NAD(+) + ATP = ADP + NADP(+) + H(+). In terms of biological role, involved in the regulation of the intracellular balance of NAD and NADP, and is a key enzyme in the biosynthesis of NADP. Catalyzes specifically the phosphorylation on 2'-hydroxyl of the adenosine moiety of NAD to yield NADP. The protein is NAD kinase of Rickettsia bellii (strain OSU 85-389).